Reading from the N-terminus, the 574-residue chain is Aspartate--tRNA ligase (574 aa).

An L-aspartate-binding site is contributed by E172. Residues 196–199 (QIFK) form an aspartate region. Residue R218 coordinates L-aspartate. Residues 218 to 220 (RDE) and Q227 contribute to the ATP site. H453 lines the L-aspartate pocket. ATP is bound at residue E487. Residue R494 participates in L-aspartate binding. 539–542 (GLDR) is a binding site for ATP.

It belongs to the class-II aminoacyl-tRNA synthetase family. Type 1 subfamily. In terms of assembly, homodimer.

The protein localises to the cytoplasm. It carries out the reaction tRNA(Asp) + L-aspartate + ATP = L-aspartyl-tRNA(Asp) + AMP + diphosphate. Its function is as follows. Catalyzes the attachment of L-aspartate to tRNA(Asp) in a two-step reaction: L-aspartate is first activated by ATP to form Asp-AMP and then transferred to the acceptor end of tRNA(Asp). This Blochmanniella pennsylvanica (strain BPEN) protein is Aspartate--tRNA ligase.